A 472-amino-acid polypeptide reads, in one-letter code: Glutamate--tRNA ligase (472 aa).

A 'HIGH' region motif is present at residues 9–19 (PSPTGYLHVGG). 4 residues coordinate Zn(2+): cysteine 98, cysteine 100, cysteine 125, and histidine 127. A 'KMSKS' region motif is present at residues 237–241 (KLSKR). Lysine 240 is a binding site for ATP.

The protein belongs to the class-I aminoacyl-tRNA synthetase family. Glutamate--tRNA ligase type 1 subfamily. As to quaternary structure, monomer. Zn(2+) serves as cofactor.

It localises to the cytoplasm. The enzyme catalyses tRNA(Glu) + L-glutamate + ATP = L-glutamyl-tRNA(Glu) + AMP + diphosphate. Its function is as follows. Catalyzes the attachment of glutamate to tRNA(Glu) in a two-step reaction: glutamate is first activated by ATP to form Glu-AMP and then transferred to the acceptor end of tRNA(Glu). The chain is Glutamate--tRNA ligase from Klebsiella pneumoniae (strain 342).